The following is a 674-amino-acid chain: Phosphopantothenoylcysteine decarboxylase subunit VHS3 (674 aa).

Disordered regions lie at residues 1–164 (MTNK…SILS), 190–230 (LNSD…RPSV), 348–368 (QHNS…NITG), 384–426 (TSSN…SNVV), and 575–674 (VSAG…LQRS). The segment covering 15 to 81 (ASNTLSGAEQ…TSGAVVSNTP (67 aa)) has biased composition (polar residues). Phosphothreonine is present on Thr90. Residues 106-116 (EQTPPNQVARQ) show a composition bias toward polar residues. Positions 137-150 (NLKDINTKVPKDGE) are enriched in basic and acidic residues. Residues 152 to 164 (SASSFSTPTSILS) show a composition bias toward polar residues. The span at 198–212 (SPRKEHPHFYVEDPL) shows a compositional bias: basic and acidic residues. The span at 214–230 (TPSVRSRSNSTSPRPSV) shows a compositional bias: low complexity. The segment covering 351–368 (SIDTSFNSTNSNAGNITG) has biased composition (polar residues). A compositionally biased stretch (low complexity) spans 384-395 (TSSNSAASQTNN). Residues 403–426 (MASTTGFPSTLGGSRTYSNSSNVV) are compositionally biased toward polar residues. The span at 580-591 (EEEEDEDNDEED) shows a compositional bias: acidic residues. The segment covering 592 to 602 (DNKKNDTGGKD) has biased composition (basic and acidic residues). Positions 603-660 (EDNDDDDDDDDDDDDDDDDDDDDDDDDDDDDDDDDDDDDDDDDDDDDDEDDEDEDEDD) are enriched in acidic residues. Residues 661–674 (EGKKKEDKGGLQRS) show a composition bias toward basic and acidic residues.

This sequence belongs to the HFCD (homooligomeric flavin containing Cys decarboxylase) superfamily. In terms of assembly, interacts with the C-terminal domain of PPZ1. Component of the phosphopantothenoylcysteine decarboxylase (PPCDC) complex, a heterotrimer composed of CAB3, SIS2 and VHS3.

Its function is as follows. Component of the phosphopantothenoylcysteine decarboxylase (PPCDC) involved in the coenzyme A synthesis. Acts as an inhibitory subunit of protein phosphatase PPZ1, which is involved in many cellular processes such as G1-S transition or salt tolerance. The chain is Phosphopantothenoylcysteine decarboxylase subunit VHS3 (VHS3) from Saccharomyces cerevisiae (strain ATCC 204508 / S288c) (Baker's yeast).